The following is a 139-amino-acid chain: MHCPLLRHTVVIEWAAPSMVGSAPMGRDSPAGMREAVYFLHRMVVCLGVLLCAASLLYVFGNFSHFLDKSQFIILRSCVGCSVLLVVACLCAGSFELYFFLTRSDAPYGRLLCITVVALLFGMGALVFNTVVLIVAKGT.

The next 3 membrane-spanning stretches (helical) occupy residues 38 to 60 (YFLH…LYVF), 72 to 94 (FIIL…CAGS), and 114 to 136 (ITVV…LIVA).

It is found in the cell membrane. This is an uncharacterized protein from Treponema pallidum (strain Nichols).